Reading from the N-terminus, the 148-residue chain is UPF0178 protein LPC_0108 (148 aa).

It belongs to the UPF0178 family.

In Legionella pneumophila (strain Corby), this protein is UPF0178 protein LPC_0108.